The following is a 704-amino-acid chain: Polyribonucleotide nucleotidyltransferase (704 aa).

Aspartate 491 and aspartate 497 together coordinate Mg(2+). Positions 558-617 constitute a KH domain; the sequence is PNYAVIEINSDKIRDVIGKGGATIRQLTEDTGAVIDIDDNGTIRIFGENKAATKEAIRQI. Residues 627 to 695 form the S1 motif domain; it reads GKVYKGTVAR…NRGRIKLTMK (69 aa).

The protein belongs to the polyribonucleotide nucleotidyltransferase family. Component of the RNA degradosome, which is a multiprotein complex involved in RNA processing and mRNA degradation. It depends on Mg(2+) as a cofactor.

It is found in the cytoplasm. It catalyses the reaction RNA(n+1) + phosphate = RNA(n) + a ribonucleoside 5'-diphosphate. Its function is as follows. Involved in mRNA degradation. Catalyzes the phosphorolysis of single-stranded polyribonucleotides processively in the 3'- to 5'-direction. The sequence is that of Polyribonucleotide nucleotidyltransferase from Psychrobacter sp. (strain PRwf-1).